Consider the following 282-residue polypeptide: Pantothenate synthetase (282 aa).

Residue 30 to 37 coordinates ATP; it reads MGYLHAGH. The Proton donor role is filled by His-37. Gln-61 provides a ligand contact to (R)-pantoate. Gln-61 is a beta-alanine binding site. 147–150 provides a ligand contact to ATP; that stretch reads GKKD. Gln-153 is a binding site for (R)-pantoate. Residues Val-176 and 184–187 contribute to the ATP site; that span reads MSSR.

This sequence belongs to the pantothenate synthetase family. As to quaternary structure, homodimer.

The protein localises to the cytoplasm. It carries out the reaction (R)-pantoate + beta-alanine + ATP = (R)-pantothenate + AMP + diphosphate + H(+). It participates in cofactor biosynthesis; (R)-pantothenate biosynthesis; (R)-pantothenate from (R)-pantoate and beta-alanine: step 1/1. Its function is as follows. Catalyzes the condensation of pantoate with beta-alanine in an ATP-dependent reaction via a pantoyl-adenylate intermediate. This Geotalea uraniireducens (strain Rf4) (Geobacter uraniireducens) protein is Pantothenate synthetase.